The primary structure comprises 534 residues: Lariat debranching enzyme A (534 aa).

A divalent metal cation is bound by residues Cys-8, His-10, Asp-39, and Asn-84. Residues 124 to 154 (SGIFKSHDYRKGHFERPPYSKDTVRSAYHVR) form a lariat recognition loop region. A divalent metal cation is bound by residues His-174, His-226, and His-228. Disordered stretches follow at residues 386-439 (EEEK…QEDE) and 469-534 (SMAV…DEDE). The segment covering 388–400 (EKEDFDMTEDNEA) has biased composition (acidic residues). A compositionally biased stretch (polar residues) spans 413–424 (STDTSILSTSVN). Acidic residues predominate over residues 428–439 (ITLEDDDEQEDE). The span at 484–499 (ELDRSESSQTEGEGKQ) shows a compositional bias: basic and acidic residues.

It belongs to the lariat debranching enzyme family. Fe(2+) serves as cofactor. Zn(2+) is required as a cofactor. The cofactor is Mn(2+).

The protein resides in the nucleus. Its activity is regulated as follows. Active in presence of diverse metals including Fe(2+), Zn(2+), Mn(2+). Also activated by Ca(2+). Binds two metal cations in two adjacent alpha and beta metal-binding pockets. Cleaves the 2'-5' phosphodiester linkage at the branch point of excised lariat intron RNA and converts them into linear molecules that can be subsequently degraded, thereby facilitating ribonucleotide turnover. Linked to its role in pre-mRNA processing mechanism, may also participate in retrovirus replication and have an antiviral cell-intrinsic defense function. In Xenopus laevis (African clawed frog), this protein is Lariat debranching enzyme A (dbr1-a).